A 348-amino-acid polypeptide reads, in one-letter code: Chitinase (348 aa).

The signal sequence occupies residues 1 to 29 (MKLKKIIPAFPLLSTVAVGLWLTPTQASA). A GH18 domain is found at 42–348 (KVLVGYWHNW…FATRYSNLVK (307 aa)). The active-site Proton donor is Glu-161.

This sequence belongs to the glycosyl hydrolase 18 family.

Its subcellular location is the secreted. The catalysed reaction is Random endo-hydrolysis of N-acetyl-beta-D-glucosaminide (1-&gt;4)-beta-linkages in chitin and chitodextrins.. The protein operates within glycan degradation; chitin degradation. Involved in chitin degradation. Catalyzes the cleavage of glycosidic linkages in chitooligosaccharides and in alpha- and beta-chitin. Its activity on chitooligosaccharides increases considerably with degrees of polymerization (the initial rate of hydrolysis for GlcNAc5 is about 130-fold higher than that for GlcNAc3). Its activity is greatly stimulated in the presence of the lytic chitin monooxygenase EfCBM33A, which attacks the crystalline structure of chitin and makes the polymer more accessible to the chitinase; combining the two enzymes leads to rapid and complete depolymerization of crystalline chitin, especially with beta-chitin as a substrate. Is likely involved in a chitin degradation pathway that allows E.faecalis V583 to grow on chitin as a carbon source. The sequence is that of Chitinase from Enterococcus faecalis (strain ATCC 700802 / V583).